Consider the following 272-residue polypeptide: Prohibitin 1 (272 aa).

Alanine 2 is modified (N-acetylalanine). Position 91 is a phosphothreonine (threonine 91). Residues lysine 128 and lysine 186 each carry the N6-acetyllysine modification. A coiled-coil region spans residues 177 to 211 (KEFTEAVEAKQVAQQEAERARFVVEKAEQQKKAAI). The residue at position 202 (lysine 202) is an N6-acetyllysine; alternate. Residue lysine 202 is modified to N6-succinyllysine; alternate. At tyrosine 249 the chain carries Phosphotyrosine.

This sequence belongs to the prohibitin family. Interacts with PHB2. Interacts with STOML2. Interacts with CD86 (via cytoplasmic domain); the interactions increases after priming with CD40. In terms of assembly, (Microbial infection) Interacts with human enterovirus 71/EV-71 capsid protein VP0, protein 3CD and protease 3C. As to expression, widely expressed in different tissues.

The protein localises to the mitochondrion inner membrane. It is found in the nucleus. Its subcellular location is the cell membrane. It localises to the cytoplasm. Its activity is regulated as follows. Target of the anti-cancer drug Rocaglamide (Roc-A). Its function is as follows. Protein with pleiotropic attributes mediated in a cell-compartment- and tissue-specific manner, which include the plasma membrane-associated cell signaling functions, mitochondrial chaperone, and transcriptional co-regulator of transcription factors in the nucleus. Plays a role in adipose tissue and glucose homeostasis in a sex-specific manner. Contributes to pulmonary vascular remodeling by accelerating proliferation of pulmonary arterial smooth muscle cells. Functionally, in the mitochondria, together with PHB2, forms large ring complexes (prohibitin complexes) in the inner mitochondrial membrane (IMM) and functions as a chaperone protein that stabilizes mitochondrial respiratory enzymes and maintains mitochondrial integrity in the IMM, which is required for mitochondrial morphogenesis, neuronal survival, and normal lifespan. The prohibitin complex, with DNAJC19, regulates cardiolipin remodeling and the protein turnover of OMA1 in a cardiolipin-binding manner. Regulates mitochondrial respiration activity playing a role in cellular aging. The prohibitin complex plays a role of mitophagy receptor involved in targeting mitochondria for autophagic degradation. Involved in mitochondrial-mediated antiviral innate immunity, activates RIG-I-mediated signal transduction and production of IFNB1 and pro-inflammatory cytokine IL6. In the nucleus, acts as a transcription coregulator, enhances promoter binding by TP53, a transcription factor it activates, but reduces the promoter binding by E2F1, a transcription factor it represses. Interacts with STAT3 to affect IL17 secretion in T-helper Th17 cells. In terms of biological role, in the plasma membrane, cooperates with CD86 to mediate CD86-signaling in B lymphocytes that regulates the level of IgG1 produced through the activation of distal signaling intermediates. Upon CD40 engagement, required to activate NF-kappa-B signaling pathway via phospholipase C and protein kinase C activation. Its function is as follows. (Microbial infection) In neuronal cells, cell surface-expressed PHB1 is involved in human enterovirus 71/EV-71 entry into neuronal cells specifically, while membrane-bound mitochondrial PHB1 associates with the virus replication complex and facilitates viral replication. May serve as a receptor for EV71. The chain is Prohibitin 1 (Phb1) from Mus musculus (Mouse).